Here is a 264-residue protein sequence, read N- to C-terminus: S-adenosylmethionine decarboxylase proenzyme (264 aa).

The Schiff-base intermediate with substrate; via pyruvic acid role is filled by Ser-112. Ser-112 carries the pyruvic acid (Ser); by autocatalysis modification. The active-site Proton acceptor; for processing activity is the His-117. Cys-140 (proton donor; for catalytic activity) is an active-site residue.

This sequence belongs to the prokaryotic AdoMetDC family. Type 2 subfamily. Heterooctamer of four alpha and four beta chains arranged as a tetramer of alpha/beta heterodimers. Requires pyruvate as cofactor. Post-translationally, is synthesized initially as an inactive proenzyme. Formation of the active enzyme involves a self-maturation process in which the active site pyruvoyl group is generated from an internal serine residue via an autocatalytic post-translational modification. Two non-identical subunits are generated from the proenzyme in this reaction, and the pyruvate is formed at the N-terminus of the alpha chain, which is derived from the carboxyl end of the proenzyme. The post-translation cleavage follows an unusual pathway, termed non-hydrolytic serinolysis, in which the side chain hydroxyl group of the serine supplies its oxygen atom to form the C-terminus of the beta chain, while the remainder of the serine residue undergoes an oxidative deamination to produce ammonia and the pyruvoyl group blocking the N-terminus of the alpha chain.

It catalyses the reaction S-adenosyl-L-methionine + H(+) = S-adenosyl 3-(methylsulfanyl)propylamine + CO2. It functions in the pathway amine and polyamine biosynthesis; S-adenosylmethioninamine biosynthesis; S-adenosylmethioninamine from S-adenosyl-L-methionine: step 1/1. Catalyzes the decarboxylation of S-adenosylmethionine to S-adenosylmethioninamine (dcAdoMet), the propylamine donor required for the synthesis of the polyamines spermine and spermidine from the diamine putrescine. This Yersinia pseudotuberculosis serotype O:1b (strain IP 31758) protein is S-adenosylmethionine decarboxylase proenzyme.